Consider the following 472-residue polypeptide: Glutamate synthase [NADPH] small chain (472 aa).

The 4Fe-4S ferredoxin-type domain occupies 38 to 69; the sequence is GQAKAQADRCLSCGNPYCEWKCPVHNYIPNWL. Residues Cys47, Cys50, Cys55, and Cys59 each coordinate [4Fe-4S] cluster.

Aggregate of 4 catalytic active heterodimers, consisting of a large and a small subunit. It depends on [4Fe-4S] cluster as a cofactor.

It carries out the reaction 2 L-glutamate + NADP(+) = L-glutamine + 2-oxoglutarate + NADPH + H(+). Its pathway is amino-acid biosynthesis; L-glutamate biosynthesis via GLT pathway; L-glutamate from 2-oxoglutarate and L-glutamine (NADP(+) route): step 1/1. The protein operates within energy metabolism; nitrogen metabolism. Functionally, catalyzes the conversion of L-glutamine and 2-oxoglutarate into two molecules of L-glutamate. The sequence is that of Glutamate synthase [NADPH] small chain (gltD) from Escherichia coli (strain K12).